A 1498-amino-acid polypeptide reads, in one-letter code: DNA-directed RNA polymerase subunit beta' (1498 aa).

C67, C69, C82, and C85 together coordinate Zn(2+). Mg(2+) contacts are provided by D499, D501, and D503. Residues C867, C943, C950, and C953 each contribute to the Zn(2+) site.

Belongs to the RNA polymerase beta' chain family. As to quaternary structure, the RNAP catalytic core consists of 2 alpha, 1 beta, 1 beta' and 1 omega subunit. When a sigma factor is associated with the core the holoenzyme is formed, which can initiate transcription. Mg(2+) is required as a cofactor. Zn(2+) serves as cofactor.

The catalysed reaction is RNA(n) + a ribonucleoside 5'-triphosphate = RNA(n+1) + diphosphate. In terms of biological role, DNA-dependent RNA polymerase catalyzes the transcription of DNA into RNA using the four ribonucleoside triphosphates as substrates. In Chlorobium luteolum (strain DSM 273 / BCRC 81028 / 2530) (Pelodictyon luteolum), this protein is DNA-directed RNA polymerase subunit beta'.